We begin with the raw amino-acid sequence, 210 residues long: Noranthrone monooxygenase (210 aa).

4 helical membrane-spanning segments follow: residues T59–I79, G105–G125, W131–A151, and V188–V208.

It belongs to the anthrone oxygenase family.

It localises to the membrane. The catalysed reaction is noranthrone + O2 = norsolorinic acid + H2O. The protein operates within mycotoxin biosynthesis; aflatoxin biosynthesis. Its function is as follows. Monooxygenase that converts norsolorinic acid anthrone to norsolorinic acid during aflatoxin biosynthesis. The sequence is that of Noranthrone monooxygenase (hypC) from Aspergillus flavus (strain ATCC 200026 / FGSC A1120 / IAM 13836 / NRRL 3357 / JCM 12722 / SRRC 167).